A 315-amino-acid polypeptide reads, in one-letter code: Probable cell division protein WhiA (315 aa).

Residues 277–311 (SLQELGAMMPSGQISKSGVNHRLRKLNQIAEGYQQ) constitute a DNA-binding region (H-T-H motif).

This sequence belongs to the WhiA family.

Its function is as follows. Involved in cell division and chromosome segregation. The chain is Probable cell division protein WhiA from Lacticaseibacillus paracasei (strain ATCC 334 / BCRC 17002 / CCUG 31169 / CIP 107868 / KCTC 3260 / NRRL B-441) (Lactobacillus paracasei).